A 270-amino-acid chain; its full sequence is 4-hydroxy-tetrahydrodipicolinate reductase (270 aa).

Residue 7 to 12 participates in NAD(+) binding; that stretch reads GVSGRM. Arginine 34 is an NADP(+) binding site. NAD(+) contacts are provided by residues 97-99 and 121-124; these read GTT and SGNM. The Proton donor/acceptor role is filled by histidine 155. Residue histidine 156 coordinates (S)-2,3,4,5-tetrahydrodipicolinate. Lysine 159 functions as the Proton donor in the catalytic mechanism. Position 165-166 (165-166) interacts with (S)-2,3,4,5-tetrahydrodipicolinate; sequence GT.

Belongs to the DapB family.

The protein localises to the cytoplasm. The catalysed reaction is (S)-2,3,4,5-tetrahydrodipicolinate + NAD(+) + H2O = (2S,4S)-4-hydroxy-2,3,4,5-tetrahydrodipicolinate + NADH + H(+). It carries out the reaction (S)-2,3,4,5-tetrahydrodipicolinate + NADP(+) + H2O = (2S,4S)-4-hydroxy-2,3,4,5-tetrahydrodipicolinate + NADPH + H(+). Its pathway is amino-acid biosynthesis; L-lysine biosynthesis via DAP pathway; (S)-tetrahydrodipicolinate from L-aspartate: step 4/4. Catalyzes the conversion of 4-hydroxy-tetrahydrodipicolinate (HTPA) to tetrahydrodipicolinate. The sequence is that of 4-hydroxy-tetrahydrodipicolinate reductase from Allorhizobium ampelinum (strain ATCC BAA-846 / DSM 112012 / S4) (Agrobacterium vitis (strain S4)).